The primary structure comprises 219 residues: Oligoribonuclease (219 aa).

Residues 30-193 (LVWLDMEMTG…ADIVESIEEL (164 aa)) enclose the Exonuclease domain. The active site involves Tyr151.

It belongs to the oligoribonuclease family.

Its subcellular location is the cytoplasm. Its function is as follows. 3'-to-5' exoribonuclease specific for small oligoribonucleotides. In Ralstonia nicotianae (strain ATCC BAA-1114 / GMI1000) (Ralstonia solanacearum), this protein is Oligoribonuclease.